The primary structure comprises 130 residues: Calcitonin gene-related peptide 2 (130 aa).

Residues 1-26 (MDFWKFFPFLALSTIWVLCLASSLQA) form the signal peptide. A propeptide spanning residues 27 to 82 (APFRSALESSLDLGTLGDQEKHLLLAALMQDYEQMKARKLEQEEQETKGSRVTAQK) is cleaved from the precursor. Cys-85 and Cys-90 form a disulfide bridge. Phe-120 carries the post-translational modification Phenylalanine amide. Residues 127–130 (DLQA) constitute a propeptide that is removed on maturation.

It belongs to the calcitonin family. In terms of tissue distribution, detected in nerve cells of cerebrum, hippocampus and pons/midbrain in newborns, and only in nerve cells of pons/midbrain in adult.

The protein resides in the secreted. CALCB/CGRP2 is a peptide hormone that induces vasodilation mediated by the CALCRL-RAMP1 receptor complex. Dilates a variety of vessels including the coronary, cerebral and systemic vasculature. Its abundance in the CNS also points toward a neurotransmitter or neuromodulator role. This Mus musculus (Mouse) protein is Calcitonin gene-related peptide 2.